A 568-amino-acid chain; its full sequence is Hemagglutinin-neuraminidase (568 aa).

Residues 1–18 (MSGAEGNTNKRTFRAVFR) lie on the Intravirion side of the membrane. A helical membrane pass occupies residues 19-39 (TLIILITLTILALSAAILYEV). Topologically, residues 40-568 (THTSNGSESN…VPFLREVIIT (529 aa)) are virion surface. Residues asparagine 44 and asparagine 111 are each glycosylated (N-linked (GlcNAc...) asparagine; by host). Intrachain disulfides connect cysteine 162/cysteine 186, cysteine 176/cysteine 237, and cysteine 228/cysteine 241. Residues 224 to 229 (NRKSCS) form an involved in neuraminidase activity region. Residues asparagine 268 and asparagine 280 are each glycosylated (N-linked (GlcNAc...) asparagine; by host). 3 disulfide bridges follow: cysteine 334–cysteine 455, cysteine 366–cysteine 376, and cysteine 449–cysteine 459. N-linked (GlcNAc...) asparagine; by host glycosylation occurs at asparagine 382. N-linked (GlcNAc...) asparagine; by host glycosylation is present at asparagine 513. Residues cysteine 531 and cysteine 542 are joined by a disulfide bond.

The protein belongs to the paramyxoviruses hemagglutinin-neuraminidase family. As to quaternary structure, homotetramer; composed of disulfide-linked homodimers.

The protein localises to the virion membrane. The protein resides in the host cell membrane. The catalysed reaction is Hydrolysis of alpha-(2-&gt;3)-, alpha-(2-&gt;6)-, alpha-(2-&gt;8)- glycosidic linkages of terminal sialic acid residues in oligosaccharides, glycoproteins, glycolipids, colominic acid and synthetic substrates.. Functionally, attaches the virus to sialic acid-containing cell receptors and thereby initiating infection. Binding of HN protein to the receptor induces a conformational change that allows the F protein to trigger virion/cell membranes fusion. Neuraminidase activity ensures the efficient spread of the virus by dissociating the mature virions from the neuraminic acid containing glycoproteins. This Simiiformes (SV41) protein is Hemagglutinin-neuraminidase (HN).